The sequence spans 1072 residues: Error-prone DNA polymerase (1072 aa).

This sequence belongs to the DNA polymerase type-C family. DnaE2 subfamily.

Its subcellular location is the cytoplasm. The catalysed reaction is DNA(n) + a 2'-deoxyribonucleoside 5'-triphosphate = DNA(n+1) + diphosphate. Its function is as follows. DNA polymerase involved in damage-induced mutagenesis and translesion synthesis (TLS). It is not the major replicative DNA polymerase. The chain is Error-prone DNA polymerase from Burkholderia pseudomallei (strain K96243).